A 1045-amino-acid polypeptide reads, in one-letter code: 3-hydroxy-3-methylglutaryl-coenzyme A reductase 2 (1045 aa).

Topologically, residues 1–24 (MSLPLKTIVHLVKPFACTARFSAR) are cytoplasmic. The helical transmembrane segment at 25-45 (YPIHVIVVAVLLSAAAYLSVT) threads the bilayer. Residues 46–186 (QSYLNEWKLD…FSNKTSEFDQ (141 aa)) lie on the Lumenal side of the membrane. Asparagine 115, asparagine 150, asparagine 158, and asparagine 179 each carry an N-linked (GlcNAc...) asparagine glycan. The chain crosses the membrane as a helical span at residues 187-207 (FDLFIILAAYLTLFYTLCCLF). An SSD domain is found at 188 to 356 (DLFIILAAYL…ATFYSAILSM (169 aa)). Residues 208–216 (NDMRKIGSK) lie on the Cytoplasmic side of the membrane. A helical transmembrane segment spans residues 217 to 237 (FWLSFSALSNSACALYLSLYT). The Lumenal portion of the chain corresponds to 238-243 (THSLLK). The helical transmembrane segment at 244 to 264 (KPASLLSLVIGLPFIVVIIGF) threads the bilayer. The Cytoplasmic portion of the chain corresponds to 265–301 (KHKVRLAAFSLQKFHRISIDKKITVSNIIYEAMFQEG). A helical membrane pass occupies residues 302 to 322 (AYLIRDYLFYISSFIGCAIYA). At 323 to 324 (RH) the chain is on the lumenal side. A helical transmembrane segment spans residues 325–345 (LPGLVNFCILSTFMLVFDLLL). Over 346 to 402 (SATFYSAILSMKLEINIIHRSTVIRQTLEEDGVVPTTADIIYKDETASEPHFLRSNV) the chain is Cytoplasmic. A helical transmembrane segment spans residues 403-423 (AIILGKASVIGLLLLINLYVF). The Lumenal portion of the chain corresponds to 424 to 497 (TDKLNATILN…DSVSNAIRDQ (74 aa)). N-linked (GlcNAc...) asparagine glycans are attached at residues asparagine 428 and asparagine 455. Residues 498-518 (FISKLLFFAFAVSISINVYLL) form a helical membrane-spanning segment. Over 519–1045 (NAAKIHTGYM…GPPCKTSALL (527 aa)) the chain is Cytoplasmic. Threonine 565 carries the post-translational modification Phosphothreonine. Catalysis depends on glutamate 710, which acts as the Charge relay system. 716–722 (SAMRGCK) is a CoA binding site. NADP(+) contacts are provided by residues 777–779 (SRF) and 804–812 (DAMGMNMIS). Catalysis depends on lysine 844, which acts as the Charge relay system. Residue 873–875 (VLK) participates in CoA binding. Aspartate 920 (charge relay system) is an active-site residue. Position 1015 to 1016 (1015 to 1016 (SH)) interacts with CoA. Histidine 1016 functions as the Proton donor in the catalytic mechanism. Positions 1018–1045 (THNRKTNKANELPQPSNKGPPCKTSALL) are disordered. 1020 to 1021 (NR) is a binding site for NADP(+).

Belongs to the HMG-CoA reductase family.

The protein resides in the endoplasmic reticulum membrane. It localises to the nucleus envelope. It catalyses the reaction (R)-mevalonate + 2 NADP(+) + CoA = (3S)-3-hydroxy-3-methylglutaryl-CoA + 2 NADPH + 2 H(+). Its pathway is metabolic intermediate biosynthesis; (R)-mevalonate biosynthesis; (R)-mevalonate from acetyl-CoA: step 3/3. HMG-CoA reductase; part of the first module of ergosterol biosynthesis pathway constitutes by the early steps of the pathway, conserved across all eukaryotes, and which results in the formation of mevalonate from acetyl-coenzyme A (acetyl-CoA). HMG1 and HMG2 catalyze the reduction of hydroxymethylglutaryl-CoA (HMG-CoA) to mevalonate that is the rate-limiting step within the first mosule. The first module starts with the action of the cytosolic acetyl-CoA acetyltransferase ERG10 that catalyzes the formation of acetoacetyl-CoA. The hydroxymethylglutaryl-CoA synthase ERG13 then condenses acetyl-CoA with acetoacetyl-CoA to form HMG-CoA. The rate-limiting step of the early module is the reduction to mevalonate by the 3-hydroxy-3-methylglutaryl-coenzyme A (HMG-CoA) reductases HMG1 and HMG2 which are derived from a single ancestral HMGR gene by gene duplication. The polypeptide is 3-hydroxy-3-methylglutaryl-coenzyme A reductase 2 (Saccharomyces cerevisiae (strain ATCC 204508 / S288c) (Baker's yeast)).